Here is a 393-residue protein sequence, read N- to C-terminus: uncharacterized protein (393 aa).

Positions 9, 15, 18, and 97 each coordinate [4Fe-4S] cluster. 4 residues coordinate S-adenosyl-L-methionine: glutamine 231, tyrosine 258, glutamate 279, and aspartate 325. The Nucleophile role is filled by cysteine 352.

This sequence belongs to the class I-like SAM-binding methyltransferase superfamily. RNA M5U methyltransferase family.

This is an uncharacterized protein from Leptospira interrogans serogroup Icterohaemorrhagiae serovar Lai (strain 56601).